Here is a 435-residue protein sequence, read N- to C-terminus: Zinc finger CCCH domain-containing protein 16 (435 aa).

Residues 1-27 (MRKELCRNFQRGSCRYGENCRFLHPQQ) form a C3H1-type zinc finger. The tract at residues 2 to 88 (RKELCRNFQR…ASTPTGGGAA (87 aa)) is 6 X 2 AA repeats of F-G. Disordered regions lie at residues 25-105 (PQQA…DHKC) and 205-374 (TPSI…SQNN). 2 repeat units span residues 34 to 35 (FG) and 36 to 37 (FG). Residues 39–51 (QNQQQQQQQQQQN) are compositionally biased toward low complexity. A run of 2 repeats spans residues 56-57 (FG) and 58-59 (FG). Residues 63–77 (GGSSRPNQFQNTWSR) show a composition bias toward polar residues. Residues 78–99 (TASTPTGGGAAASTQQTGKQTQ) show a composition bias toward low complexity. Polar residues-rich tracts occupy residues 205-320 (TPSI…VNTP) and 328-339 (SGFQTNPSTTFK). 2 consecutive repeat copies span residues 343 to 344 (FG) and 359 to 360 (FG). Over residues 351 to 374 (TTPQNNNIFGQSTPTPATNTSQNN) the composition is skewed to polar residues.

In terms of assembly, part of the nuclear pore complex (NPC). The NPC has an eight-fold symmetrical structure comprising a central transport channel and two rings, the cytoplasmic and nuclear rings, to which eight filaments are attached. The cytoplasmic filaments have loose ends, while the nuclear filaments are joined in a distal ring, forming a nuclear basket. NPCs are highly dynamic in configuration and composition, and can be devided in 3 subcomplexes, the NUP62 subcomplex, the NUP107-160 subcomplex and the NUP93 subcomplex, containing approximately 30 different nucleoporin proteins.

The protein resides in the nucleus envelope. It is found in the nucleus. It localises to the nuclear pore complex. The chain is Zinc finger CCCH domain-containing protein 16 from Arabidopsis thaliana (Mouse-ear cress).